A 1044-amino-acid polypeptide reads, in one-letter code: Sarcoplasmic/endoplasmic reticulum calcium ATPase 2 (1044 aa).

Residues 1–48 (MENAHTKTVEEVLGHFGVNESTGLSLEQVKKLKERWGSNELPAEEGKT) lie on the Cytoplasmic side of the membrane. Ser38 carries the post-translational modification Phosphoserine. Residues 49–69 (LLELVIEQFEDLLVRILLLAA) form a helical membrane-spanning segment. Residues 70–89 (CISFVLAWFEEGEETITAFV) lie on the Lumenal side of the membrane. Residues 90–110 (EPFVILLILVANAIVGVWQER) form a helical membrane-spanning segment. Residues 111–253 (NAENAIEALK…QERTPLQQKL (143 aa)) are Cytoplasmic-facing. The chain crosses the membrane as a helical span at residues 254–273 (DEFGEQLSKVISLICIAVWI). Residues 274-295 (INIGHFNDPVHGGSWIRGAIYY) lie on the Lumenal side of the membrane. 3'-nitrotyrosine is present on residues Tyr294 and Tyr295. Residues 296-313 (FKIAVALAVAAIPEGLPA) form a helical membrane-spanning segment. Residues Val304, Ala305, Ile307, and Glu309 each contribute to the Ca(2+) site. The Cytoplasmic segment spans residues 314 to 756 (VITTCLALGT…EEGRAIYNNM (443 aa)). The active-site 4-aspartylphosphate intermediate is the Asp351. Positions 351 and 353 each coordinate Mg(2+). Thr353 serves as a coordination point for ATP. Thr441 carries the post-translational modification Phosphothreonine. Residues Glu442, Arg489, and Lys514 each contribute to the ATP site. Residue Ser531 is modified to Phosphoserine. Arg559 lines the ATP pocket. The interval 575–594 (MHLEDSANFIKYETNLTFVG) is interaction with HAX1. Ser580 is subject to Phosphoserine. Thr624, Gly625, and Asp626 together coordinate ATP. 2 positions are modified to phosphoserine: Ser661 and Ser663. ATP-binding residues include Arg677 and Lys683. Asp702 is a binding site for Mg(2+). An ATP-binding site is contributed by Asn705. The helical transmembrane segment at 757–776 (KQFIRYLISSNVGEVVCIFL) threads the bilayer. Ca(2+) contacts are provided by Asn767 and Glu770. The Lumenal portion of the chain corresponds to 777-786 (TAALGFPEAL). The helical transmembrane segment at 787–807 (IPVQLLWVNLVTDGLPATALG) threads the bilayer. Residues 787–807 (IPVQLLWVNLVTDGLPATALG) are interaction with PLN. Residues 788-1044 (PVQLLWVNLV…DTNFSDMFWS (257 aa)) form an interaction with TMEM64 and PDIA3 region. The Ca(2+) site is built by Asn795, Thr798, and Asp799. Residues 808–827 (FNPPDLDIMNKPPRNPKEPL) lie on the Cytoplasmic side of the membrane. The helical transmembrane segment at 828 to 850 (ISGWLFFRYLAIGCYVGAATVGA) threads the bilayer. Residues 851 to 896 (AAWWFIAADGGPRVSFYQLSHFLQCKEDNPDFDGVDCAIFESPYPM) lie on the Lumenal side of the membrane. Cysteines 875 and 887 form a disulfide. A helical transmembrane segment spans residues 897–916 (TMALSVLVTIEMCNALNSLS). Glu907 serves as a coordination point for Ca(2+). Over 917–929 (ENQSLLRMPPWEN) the chain is Cytoplasmic. Residues 930–948 (IWLVGSICLSMSLHFLILY) traverse the membrane as a helical segment. Residues 931–942 (WLVGSICLSMSL) form an interaction with PLN region. Over 949–963 (VEPLPLIFQITPLNL) the chain is Lumenal. The helical transmembrane segment at 964–984 (TQWLMVLKISLPVILMDETLK) threads the bilayer. The Cytoplasmic portion of the chain corresponds to 985-1044 (FVARNYLEQPGKECVQPATKSSCSLSACTDGISWPFVLLIMPLVVWVYSTDTNFSDMFWS).

This sequence belongs to the cation transport ATPase (P-type) (TC 3.A.3) family. Type IIA subfamily. As to quaternary structure, interacts with sarcolipin (SLN); the interaction inhibits ATP2A2 Ca(2+) affinity. Interacts with phospholamban (PLN); the interaction inhibits ATP2A2 Ca(2+) affinity. Interacts with myoregulin (MRLN). Interacts with ARLN and ERLN; the interactions inhibit ATP2A2 Ca(2+) affinity. Interacts with STRIT1/DWORF; the interaction results in activation of ATP2A2. Interacts with the monomeric forms of SLN, PLN, ARLN, ERLN and STRI1/DWORF. Interacts with HAX1. Interacts with S100A8 and S100A9. Interacts with SLC35G1 and STIM1. Interacts with TMEM203. Interacts with TMEM64 and PDIA3. Interacts with TMX1. Interacts with TMX2. Interacts with VMP1; VMP1 competes with PLN and SLN to prevent them from forming an inhibitory complex with ATP2A2. Interacts with ULK1. Interacts with S100A1 in a Ca(2+)-dependent manner. Interacts with TUNAR. Interacts with FLVCR2; this interaction occurs in the absence of heme and promotes ATP2A2 proteasomal degradation; this complex is dissociated upon heme binding. Interacts with FNIP1. Interacts with TRAM2 (via C-terminus). Mg(2+) is required as a cofactor. Post-translationally, nitrated under oxidative stress. Nitration on the two tyrosine residues inhibits catalytic activity. Serotonylated on Gln residues by TGM2 in response to hypoxia, leading to its inactivation. In terms of tissue distribution, isoform 2 is highly expressed in heart and slow twitch skeletal muscle. Isoform 2 is widely expressed.

It is found in the endoplasmic reticulum membrane. Its subcellular location is the sarcoplasmic reticulum membrane. It catalyses the reaction Ca(2+)(in) + ATP + H2O = Ca(2+)(out) + ADP + phosphate + H(+). Has different conformational states with differential Ca2+ affinity. The E1 conformational state (active form) shows high Ca(2+) affinity, while the E2 state exhibits low Ca(2+) affinity. Binding of ATP allosterically increases its affinity for subsequent binding of Ca2+. Reversibly inhibited by phospholamban (PLN) at low calcium concentrations. PLN inhibits ATP2A2 Ca(2+) affinity by disrupting its allosteric activation by ATP. Inhibited by sarcolipin (SLN) and myoregulin (MRLN). The inhibition is blocked by VMP1. Enhanced by STRIT1/DWORF; STRIT1 increases activity by displacing sarcolipin (SLN), phospholamban (PLN) and myoregulin (MRLN). Stabilizes SERCA2 in its E2 state. This magnesium-dependent enzyme catalyzes the hydrolysis of ATP coupled with the translocation of calcium from the cytosol to the sarcoplasmic reticulum lumen. Involved in autophagy in response to starvation. Upon interaction with VMP1 and activation, controls ER-isolation membrane contacts for autophagosome formation. Also modulates ER contacts with lipid droplets, mitochondria and endosomes. In coordination with FLVCR2 mediates heme-stimulated switching from mitochondrial ATP synthesis to thermogenesis. Its function is as follows. Involved in the regulation of the contraction/relaxation cycle. Acts as a regulator of TNFSF11-mediated Ca(2+) signaling pathways via its interaction with TMEM64 which is critical for the TNFSF11-induced CREB1 activation and mitochondrial ROS generation necessary for proper osteoclast generation. Association between TMEM64 and SERCA2 in the ER leads to cytosolic Ca(2+) spiking for activation of NFATC1 and production of mitochondrial ROS, thereby triggering Ca(2+) signaling cascades that promote osteoclast differentiation and activation. In Mus musculus (Mouse), this protein is Sarcoplasmic/endoplasmic reticulum calcium ATPase 2.